We begin with the raw amino-acid sequence, 818 residues long: Glycerol-3-phosphate acyltransferase (818 aa).

The HXXXXD motif motif lies at 305-310; sequence HRSHMD.

This sequence belongs to the GPAT/DAPAT family.

It is found in the cell inner membrane. It carries out the reaction sn-glycerol 3-phosphate + an acyl-CoA = a 1-acyl-sn-glycero-3-phosphate + CoA. Its pathway is phospholipid metabolism; CDP-diacylglycerol biosynthesis; CDP-diacylglycerol from sn-glycerol 3-phosphate: step 1/3. This is Glycerol-3-phosphate acyltransferase from Photorhabdus laumondii subsp. laumondii (strain DSM 15139 / CIP 105565 / TT01) (Photorhabdus luminescens subsp. laumondii).